A 227-amino-acid polypeptide reads, in one-letter code: Transmembrane emp24 domain-containing protein 1 (227 aa).

Residues 1-23 (MMAAGTALGLALWLLLPPVGVGG) form the signal peptide. The Extracellular segment spans residues 24–194 (AGPPPIQDGE…LQEGNLERVN (171 aa)). Residues 43–125 (KQCFYQSAPA…EKLVFFELIF (83 aa)) enclose the GOLD domain. Positions 145–170 (EILEVKMEDIKESIETMRIRLERSIQ) form a coiled coil. The helical transmembrane segment at 195–215 (FWSAVNVAVLLLVAVLQVCTL) threads the bilayer. Residues 216 to 227 (KRFFQDKRPVPM) lie on the Cytoplasmic side of the membrane. Positions 218–219 (FF) match the COPII vesicle coat-binding motif. The COPI vesicle coat-binding signature appears at 218–227 (FFQDKRPVPM).

This sequence belongs to the EMP24/GP25L family. In terms of assembly, homodimer in endoplasmic reticulum, endoplasmic reticulum-Golgi intermediate compartment and cis-Golgi network. Interacts with IL1RL1. Interacts with RNF26; this interaction is important to modulate innate immune signaling through the cGAS-STING pathway.

The protein localises to the cell membrane. Its subcellular location is the endoplasmic reticulum membrane. It is found in the golgi apparatus. It localises to the cis-Golgi network membrane. The protein resides in the endoplasmic reticulum-Golgi intermediate compartment membrane. In terms of biological role, potential role in vesicular protein trafficking, mainly in the early secretory pathway. May act as a cargo receptor at the lumenal side for incorporation of secretory cargo molecules into transport vesicles and may be involved in vesicle coat formation at the cytoplasmic side. Plays a positive role in IL-33-mediated IL-8 and IL-6 production by interacting with interleukin-33 receptor IL1RL1. Plays also a role in the modulation of innate immune signaling through the cGAS-STING pathway by interacting with RNF26. The protein is Transmembrane emp24 domain-containing protein 1 (TMED1) of Bos taurus (Bovine).